We begin with the raw amino-acid sequence, 419 residues long: Endochitinase 2 (419 aa).

The first 18 residues, 1–18 (MHHLRALVGVGLAGLAAG), serve as a signal peptide directing secretion. Positions 35–343 (AQNVVYWGQN…QQAKSILVNG (309 aa)) constitute a GH18 domain. The N-linked (GlcNAc...) asparagine glycan is linked to N153. The active-site Proton donor is the E173. N-linked (GlcNAc...) asparagine glycosylation is found at N237 and N256. The tract at residues 343 to 390 (GAPCPSSGPPSSTPATAPAPTATTMPSSTSVSSPTASPTGGTVPQWGQ) is disordered. Residues 355–384 (TPATAPAPTATTMPSSTSVSSPTASPTGGT) show a composition bias toward low complexity. The CBM1 domain maps to 383–419 (GTVPQWGQCGGEGYSGPTQCVPPYQCVKQGDWWSSCR).

It belongs to the glycosyl hydrolase 18 family. Chitinase class III subfamily.

It is found in the secreted. The enzyme catalyses Random endo-hydrolysis of N-acetyl-beta-D-glucosaminide (1-&gt;4)-beta-linkages in chitin and chitodextrins.. Its function is as follows. Secreted chitinase involved in the degradation of chitin, a component of the cell walls of fungi and exoskeletal elements of some animals (including worms and arthropods). Participates in the infection process and directly acts in the penetration process of the host cuticle. This Metarhizium anisopliae (Entomophthora anisopliae) protein is Endochitinase 2 (chi2).